The following is a 507-amino-acid chain: ATP synthase subunit alpha (507 aa).

Glycine 170 to threonine 177 is a binding site for ATP.

The protein belongs to the ATPase alpha/beta chains family. As to quaternary structure, F-type ATPases have 2 components, CF(1) - the catalytic core - and CF(0) - the membrane proton channel. CF(1) has five subunits: alpha(3), beta(3), gamma(1), delta(1), epsilon(1). CF(0) has three main subunits: a(1), b(2) and c(9-12). The alpha and beta chains form an alternating ring which encloses part of the gamma chain. CF(1) is attached to CF(0) by a central stalk formed by the gamma and epsilon chains, while a peripheral stalk is formed by the delta and b chains.

It is found in the cell inner membrane. It catalyses the reaction ATP + H2O + 4 H(+)(in) = ADP + phosphate + 5 H(+)(out). Functionally, produces ATP from ADP in the presence of a proton gradient across the membrane. The alpha chain is a regulatory subunit. This Thermosipho africanus (strain TCF52B) protein is ATP synthase subunit alpha.